The sequence spans 189 residues: MDKKKHGSHAGAHHTDEPAAETVAPAAEGAPAAADRVKELEEALAAKEAEAAANWDKFVRERADLENYRKRTQKEKEELLKYGNESLIVEILPVVDNMERALDHSDDDSASAVIEGVRMTLNMLLSTLKKFGVTVVEAEKGTPFDPAVHQAMCQVENTDVPANSVVEIFQKGYLLNERLIRPAMVSVSK.

Over residues 1–12 (MDKKKHGSHAGA) the composition is skewed to basic residues. Residues 1–36 (MDKKKHGSHAGAHHTDEPAAETVAPAAEGAPAAADR) are disordered. Residues 20 to 34 (AETVAPAAEGAPAAA) are compositionally biased toward low complexity.

The protein belongs to the GrpE family. In terms of assembly, homodimer.

It localises to the cytoplasm. Functionally, participates actively in the response to hyperosmotic and heat shock by preventing the aggregation of stress-denatured proteins, in association with DnaK and GrpE. It is the nucleotide exchange factor for DnaK and may function as a thermosensor. Unfolded proteins bind initially to DnaJ; upon interaction with the DnaJ-bound protein, DnaK hydrolyzes its bound ATP, resulting in the formation of a stable complex. GrpE releases ADP from DnaK; ATP binding to DnaK triggers the release of the substrate protein, thus completing the reaction cycle. Several rounds of ATP-dependent interactions between DnaJ, DnaK and GrpE are required for fully efficient folding. This Geobacter metallireducens (strain ATCC 53774 / DSM 7210 / GS-15) protein is Protein GrpE.